The chain runs to 476 residues: Glucose-1-phosphate adenylyltransferase (476 aa).

Alpha-D-glucose 1-phosphate-binding positions include Tyr-114, Gly-179, 194 to 195, and Ser-212; that span reads EK.

The protein belongs to the bacterial/plant glucose-1-phosphate adenylyltransferase family. Homotetramer.

The enzyme catalyses alpha-D-glucose 1-phosphate + ATP + H(+) = ADP-alpha-D-glucose + diphosphate. It functions in the pathway glycan biosynthesis; glycogen biosynthesis. Involved in the biosynthesis of ADP-glucose, a building block required for the elongation reactions to produce glycogen. Catalyzes the reaction between ATP and alpha-D-glucose 1-phosphate (G1P) to produce pyrophosphate and ADP-Glc. This is Glucose-1-phosphate adenylyltransferase from Yersinia pestis.